We begin with the raw amino-acid sequence, 473 residues long: Methionine aminopeptidase 2 (473 aa).

The interval 23 to 121 (LAEDSSNGTQ…KLVSIDQSYP (99 aa)) is disordered. Polar residues predominate over residues 41–53 (KATTAVGQDNGNN). Residues 73–83 (DDDDDDEDDDV) are compositionally biased toward acidic residues. Low complexity predominate over residues 84-93 (AAAAAAVGDA). Residues 97-113 (KKKKKKKSSNKKKKKKL) show a composition bias toward basic residues. Histidine 224 lines the substrate pocket. The a divalent metal cation site is built by aspartate 244, aspartate 255, and histidine 326. Histidine 334 is a binding site for substrate. 2 residues coordinate a divalent metal cation: glutamate 359 and glutamate 454.

This sequence belongs to the peptidase M24A family. Methionine aminopeptidase eukaryotic type 2 subfamily. Co(2+) serves as cofactor. It depends on Zn(2+) as a cofactor. Mn(2+) is required as a cofactor. The cofactor is Fe(2+).

The protein resides in the cytoplasm. It carries out the reaction Release of N-terminal amino acids, preferentially methionine, from peptides and arylamides.. Cotranslationally removes the N-terminal methionine from nascent proteins. The N-terminal methionine is often cleaved when the second residue in the primary sequence is small and uncharged (Met-Ala-, Cys, Gly, Pro, Ser, Thr, or Val). In Lodderomyces elongisporus (strain ATCC 11503 / CBS 2605 / JCM 1781 / NBRC 1676 / NRRL YB-4239) (Yeast), this protein is Methionine aminopeptidase 2.